The primary structure comprises 180 residues: Oligoribonuclease (180 aa).

Residues Leu-7–Leu-170 form the Exonuclease domain. Residue Tyr-128 is part of the active site.

The protein belongs to the oligoribonuclease family.

It is found in the cytoplasm. Its function is as follows. 3'-to-5' exoribonuclease specific for small oligoribonucleotides. The polypeptide is Oligoribonuclease (Ruthia magnifica subsp. Calyptogena magnifica).